Reading from the N-terminus, the 250-residue chain is Ubiquinone/menaquinone biosynthesis C-methyltransferase UbiE (250 aa).

S-adenosyl-L-methionine is bound by residues T73, D94, 122 to 123, and S139; that span reads NA.

This sequence belongs to the class I-like SAM-binding methyltransferase superfamily. MenG/UbiE family.

It catalyses the reaction a 2-demethylmenaquinol + S-adenosyl-L-methionine = a menaquinol + S-adenosyl-L-homocysteine + H(+). The catalysed reaction is a 2-methoxy-6-(all-trans-polyprenyl)benzene-1,4-diol + S-adenosyl-L-methionine = a 5-methoxy-2-methyl-3-(all-trans-polyprenyl)benzene-1,4-diol + S-adenosyl-L-homocysteine + H(+). It participates in quinol/quinone metabolism; menaquinone biosynthesis; menaquinol from 1,4-dihydroxy-2-naphthoate: step 2/2. It functions in the pathway cofactor biosynthesis; ubiquinone biosynthesis. Methyltransferase required for the conversion of demethylmenaquinol (DMKH2) to menaquinol (MKH2) and the conversion of 2-polyprenyl-6-methoxy-1,4-benzoquinol (DDMQH2) to 2-polyprenyl-3-methyl-6-methoxy-1,4-benzoquinol (DMQH2). This chain is Ubiquinone/menaquinone biosynthesis C-methyltransferase UbiE, found in Francisella tularensis subsp. mediasiatica (strain FSC147).